We begin with the raw amino-acid sequence, 463 residues long: ATP synthase subunit beta 1 (463 aa).

An ATP-binding site is contributed by 152 to 159 (GGAGVGKT).

Belongs to the ATPase alpha/beta chains family. As to quaternary structure, F-type ATPases have 2 components, CF(1) - the catalytic core - and CF(0) - the membrane proton channel. CF(1) has five subunits: alpha(3), beta(3), gamma(1), delta(1), epsilon(1). CF(0) has three main subunits: a(1), b(2) and c(9-12). The alpha and beta chains form an alternating ring which encloses part of the gamma chain. CF(1) is attached to CF(0) by a central stalk formed by the gamma and epsilon chains, while a peripheral stalk is formed by the delta and b chains.

It is found in the cell inner membrane. It catalyses the reaction ATP + H2O + 4 H(+)(in) = ADP + phosphate + 5 H(+)(out). In terms of biological role, produces ATP from ADP in the presence of a proton gradient across the membrane. The catalytic sites are hosted primarily by the beta subunits. This chain is ATP synthase subunit beta 1, found in Shewanella frigidimarina (strain NCIMB 400).